We begin with the raw amino-acid sequence, 448 residues long: Phosphoglucosamine mutase (448 aa).

Residue Ser-100 is the Phosphoserine intermediate of the active site. Positions 100, 240, 242, and 244 each coordinate Mg(2+). Ser-100 bears the Phosphoserine mark.

Belongs to the phosphohexose mutase family. Mg(2+) serves as cofactor. Activated by phosphorylation.

The catalysed reaction is alpha-D-glucosamine 1-phosphate = D-glucosamine 6-phosphate. In terms of biological role, catalyzes the conversion of glucosamine-6-phosphate to glucosamine-1-phosphate. The sequence is that of Phosphoglucosamine mutase from Bacillus cereus (strain ATCC 10987 / NRS 248).